Reading from the N-terminus, the 128-residue chain is Glycine cleavage system H protein (128 aa).

The Lipoyl-binding domain occupies 23 to 105; sequence IGIVGITWFA…YGEGWILKLE (83 aa). Lysine 64 carries the N6-lipoyllysine modification.

Belongs to the GcvH family. As to quaternary structure, the glycine cleavage system is composed of four proteins: P, T, L and H. The cofactor is (R)-lipoate.

Its function is as follows. The glycine cleavage system catalyzes the degradation of glycine. The H protein shuttles the methylamine group of glycine from the P protein to the T protein. The chain is Glycine cleavage system H protein from Symbiobacterium thermophilum (strain DSM 24528 / JCM 14929 / IAM 14863 / T).